The sequence spans 476 residues: Bifunctional protein HldE (476 aa).

The ribokinase stretch occupies residues 1-318; it reads MKVTLPEFER…ENAVRGRADT (318 aa). Position 195 to 198 (195 to 198) interacts with ATP; it reads NLSE. Asp-264 is a catalytic residue. The segment at 344–476 is cytidylyltransferase; sequence MTNGVFDILH…IIKKIQKDSQ (133 aa).

In the N-terminal section; belongs to the carbohydrate kinase PfkB family. The protein in the C-terminal section; belongs to the cytidylyltransferase family. As to quaternary structure, homodimer.

The enzyme catalyses D-glycero-beta-D-manno-heptose 7-phosphate + ATP = D-glycero-beta-D-manno-heptose 1,7-bisphosphate + ADP + H(+). It carries out the reaction D-glycero-beta-D-manno-heptose 1-phosphate + ATP + H(+) = ADP-D-glycero-beta-D-manno-heptose + diphosphate. It participates in nucleotide-sugar biosynthesis; ADP-L-glycero-beta-D-manno-heptose biosynthesis; ADP-L-glycero-beta-D-manno-heptose from D-glycero-beta-D-manno-heptose 7-phosphate: step 1/4. It functions in the pathway nucleotide-sugar biosynthesis; ADP-L-glycero-beta-D-manno-heptose biosynthesis; ADP-L-glycero-beta-D-manno-heptose from D-glycero-beta-D-manno-heptose 7-phosphate: step 3/4. In terms of biological role, catalyzes the phosphorylation of D-glycero-D-manno-heptose 7-phosphate at the C-1 position to selectively form D-glycero-beta-D-manno-heptose-1,7-bisphosphate. Its function is as follows. Catalyzes the ADP transfer from ATP to D-glycero-beta-D-manno-heptose 1-phosphate, yielding ADP-D-glycero-beta-D-manno-heptose. This chain is Bifunctional protein HldE, found in Enterobacter sp. (strain 638).